The following is a 104-amino-acid chain: Cytochrome c-551 (104 aa).

An N-terminal signal peptide occupies residues 1–22; sequence MKKILIPMLALGGALAMQPALA. Heme c-binding residues include Cys-34, Cys-37, His-38, and Met-83.

Post-translationally, binds 1 heme c group covalently per subunit.

It is found in the periplasm. Electron donor for cytochrome cd1 in nitrite and nitrate respiration. This chain is Cytochrome c-551 (nirM), found in Stutzerimonas stutzeri (Pseudomonas stutzeri).